Consider the following 564-residue polypeptide: Septation ring formation regulator EzrA (564 aa).

The Extracellular segment spans residues 1-2 (ME). Residues 3–21 (FVIGLLALFLILFATGYLF) traverse the membrane as a helical segment. Over 22–564 (RKNIYKEIDR…RLEADAKQPE (543 aa)) the chain is Cytoplasmic. 3 coiled-coil regions span residues 99–159 (QKSK…AYSH), 243–281 (KGYKLDHIQVEKELENLLKELKRAEDALLDELDLEEAAA), and 310–498 (KVPE…VELV).

Belongs to the EzrA family.

The protein resides in the cell membrane. In terms of biological role, negative regulator of FtsZ ring formation; modulates the frequency and position of FtsZ ring formation. Inhibits FtsZ ring formation at polar sites. Interacts either with FtsZ or with one of its binding partners to promote depolymerization. In Bacillus licheniformis (strain ATCC 14580 / DSM 13 / JCM 2505 / CCUG 7422 / NBRC 12200 / NCIMB 9375 / NCTC 10341 / NRRL NRS-1264 / Gibson 46), this protein is Septation ring formation regulator EzrA.